We begin with the raw amino-acid sequence, 454 residues long: Bifunctional protein GlmU (454 aa).

Positions 1 to 228 (MTLPLHVVIL…PQDVEGANDP (228 aa)) are pyrophosphorylase. Residues 10 to 13 (LAAG), K24, Q76, 81 to 82 (GT), 103 to 105 (YGD), G138, E153, N168, and N226 contribute to the UDP-N-acetyl-alpha-D-glucosamine site. Residue D105 coordinates Mg(2+). Mg(2+) is bound at residue N226. Residues 229–249 (WQLAQLERAWQLRAARALCLQ) form a linker region. Residues 250-454 (GVRMADPARV…IEGWERPKKK (205 aa)) form an N-acetyltransferase region. Positions 332 and 350 each coordinate UDP-N-acetyl-alpha-D-glucosamine. Residue H362 is the Proton acceptor of the active site. Residues Y365 and N376 each contribute to the UDP-N-acetyl-alpha-D-glucosamine site. Residues A379, 385-386 (NY), S404, A422, and R439 contribute to the acetyl-CoA site.

The protein in the N-terminal section; belongs to the N-acetylglucosamine-1-phosphate uridyltransferase family. It in the C-terminal section; belongs to the transferase hexapeptide repeat family. As to quaternary structure, homotrimer. The cofactor is Mg(2+).

Its subcellular location is the cytoplasm. The catalysed reaction is alpha-D-glucosamine 1-phosphate + acetyl-CoA = N-acetyl-alpha-D-glucosamine 1-phosphate + CoA + H(+). The enzyme catalyses N-acetyl-alpha-D-glucosamine 1-phosphate + UTP + H(+) = UDP-N-acetyl-alpha-D-glucosamine + diphosphate. The protein operates within nucleotide-sugar biosynthesis; UDP-N-acetyl-alpha-D-glucosamine biosynthesis; N-acetyl-alpha-D-glucosamine 1-phosphate from alpha-D-glucosamine 6-phosphate (route II): step 2/2. It functions in the pathway nucleotide-sugar biosynthesis; UDP-N-acetyl-alpha-D-glucosamine biosynthesis; UDP-N-acetyl-alpha-D-glucosamine from N-acetyl-alpha-D-glucosamine 1-phosphate: step 1/1. Its pathway is bacterial outer membrane biogenesis; LPS lipid A biosynthesis. In terms of biological role, catalyzes the last two sequential reactions in the de novo biosynthetic pathway for UDP-N-acetylglucosamine (UDP-GlcNAc). The C-terminal domain catalyzes the transfer of acetyl group from acetyl coenzyme A to glucosamine-1-phosphate (GlcN-1-P) to produce N-acetylglucosamine-1-phosphate (GlcNAc-1-P), which is converted into UDP-GlcNAc by the transfer of uridine 5-monophosphate (from uridine 5-triphosphate), a reaction catalyzed by the N-terminal domain. This Xanthomonas campestris pv. campestris (strain B100) protein is Bifunctional protein GlmU.